Reading from the N-terminus, the 101-residue chain is Ubiquitin-related modifier 1 (101 aa).

Position 101 is a 1-thioglycine (glycine 101). A Glycyl lysine isopeptide (Gly-Lys) (interchain with K-? in acceptor proteins) cross-link involves residue glycine 101.

The protein belongs to the URM1 family. C-terminal thiocarboxylation occurs in 2 steps, it is first acyl-adenylated (-COAMP) via the hesA/moeB/thiF part of UBA4, then thiocarboxylated (-COSH) via the rhodanese domain of UBA4.

The protein resides in the cytoplasm. Its pathway is tRNA modification; 5-methoxycarbonylmethyl-2-thiouridine-tRNA biosynthesis. Its function is as follows. Acts as a sulfur carrier required for 2-thiolation of mcm(5)S(2)U at tRNA wobble positions of cytosolic tRNA(Lys), tRNA(Glu) and tRNA(Gln). Serves as sulfur donor in tRNA 2-thiolation reaction by being thiocarboxylated (-COSH) at its C-terminus by the MOCS3 homolog UBA4. The sulfur is then transferred to tRNA to form 2-thiolation of mcm(5)S(2)U. Prior mcm(5) tRNA modification by the elongator complex is required for 2-thiolation. Also acts as a ubiquitin-like protein (UBL) that is covalently conjugated via an isopeptide bond to lysine residues of target proteins such as AHP1. The thiocarboxylated form serves as substrate for conjugation and oxidative stress specifically induces the formation of UBL-protein conjugates. In Kluyveromyces lactis (strain ATCC 8585 / CBS 2359 / DSM 70799 / NBRC 1267 / NRRL Y-1140 / WM37) (Yeast), this protein is Ubiquitin-related modifier 1.